Consider the following 187-residue polypeptide: Ubiquinone biosynthesis protein COQ4 homolog, mitochondrial (187 aa).

Zn(2+) is bound by residues H77, D78, H81, and E93.

It belongs to the COQ4 family. In terms of assembly, component of a multi-subunit COQ enzyme complex. Zn(2+) serves as cofactor.

Its subcellular location is the mitochondrion inner membrane. It carries out the reaction a 4-hydroxy-3-methoxy-5-(all-trans-polyprenyl)benzoate + H(+) = a 2-methoxy-6-(all-trans-polyprenyl)phenol + CO2. It participates in cofactor biosynthesis; ubiquinone biosynthesis. Lyase that catalyzes the C1-decarboxylation of 4-hydroxy-3-methoxy-5-(all-trans-polyprenyl)benzoic acid into 2-methoxy-6-(all-trans-polyprenyl)phenol during ubiquinone biosynthesis. The sequence is that of Ubiquinone biosynthesis protein COQ4 homolog, mitochondrial from Leishmania braziliensis.